We begin with the raw amino-acid sequence, 857 residues long: Gelation factor (857 aa).

M1 carries the post-translational modification Blocked amino end (Met). Positions 1–250 are actin-binding; that stretch reads MAAAPSGKTW…EKKRRETSDA (250 aa). 2 Calponin-homology (CH) domains span residues 12–117 and 125–227; these read DVQK…LRYQ and NSPK…DYAL. Residues 229–246 form a regulatory site region; the sequence is KEKRDADALAALEKKRRE. 6 Filamin repeats span residues 245–346, 347–446, 447–545, 546–645, 646–747, and 763–837; these read RETS…NVKI, DGSD…EVKI, LNSD…SIHI, KPAA…TVTV, KPAP…DVKC, and FTVA…KQVL. The tract at residues 832 to 857 is disordered; it reads PFKQVLGNPGKKNPEVKSFTTTRTAN.

As to quaternary structure, homodimer.

Functionally, F-actin cross-linking protein. The chain is Gelation factor (abpC) from Dictyostelium discoideum (Social amoeba).